The sequence spans 172 residues: Small ribosomal subunit protein uS5 (172 aa).

The region spanning 17 to 80 (MREKMIAVNR…EECRRNLVKV (64 aa)) is the S5 DRBM domain.

This sequence belongs to the universal ribosomal protein uS5 family. Part of the 30S ribosomal subunit. Contacts proteins S4 and S8.

Its function is as follows. With S4 and S12 plays an important role in translational accuracy. Functionally, located at the back of the 30S subunit body where it stabilizes the conformation of the head with respect to the body. In Paracidovorax citrulli (strain AAC00-1) (Acidovorax citrulli), this protein is Small ribosomal subunit protein uS5.